Consider the following 238-residue polypeptide: Response regulator receiver protein Anae109_2439 (238 aa).

2 consecutive Response regulatory domains span residues 3 to 117 (RYLI…AAAR) and 121 to 228 (LVAV…ERLH). Asp52 and Asp169 each carry 4-aspartylphosphate.

In terms of processing, is diphosphorylated by GchK.

Functionally, member of the two-component regulatory system GcHK/Anae109_2439. Is involved in a signal transduction system responding to oxygen availability. The sequence is that of Response regulator receiver protein Anae109_2439 from Anaeromyxobacter sp. (strain Fw109-5).